Here is a 122-residue protein sequence, read N- to C-terminus: Large ribosomal subunit protein uL18 (122 aa).

This sequence belongs to the universal ribosomal protein uL18 family. As to quaternary structure, part of the 50S ribosomal subunit; part of the 5S rRNA/L5/L18/L25 subcomplex. Contacts the 5S and 23S rRNAs.

Its function is as follows. This is one of the proteins that bind and probably mediate the attachment of the 5S RNA into the large ribosomal subunit, where it forms part of the central protuberance. In Kosmotoga olearia (strain ATCC BAA-1733 / DSM 21960 / TBF 19.5.1), this protein is Large ribosomal subunit protein uL18.